The following is a 128-amino-acid chain: MKMTKLTTLLLTATLGLASGAALAAESNAQSSNGQANSAANAGQVAPDARQNVAPNDVNNNDINTNGNTNSTMQHPDGSTMNHDGMTKDEEHKNTMCKDGRCPDINKKVETGNGVNNDVNTKTDGTTQ.

A signal peptide spans 1–24 (MKMTKLTTLLLTATLGLASGAALA). 2 stretches are compositionally biased toward low complexity: residues 24-44 (AAES…NAGQ) and 52-70 (NVAP…GNTN). The disordered stretch occupies residues 24–128 (AAESNAQSSN…VNTKTDGTTQ (105 aa)). The span at 71 to 82 (STMQHPDGSTMN) shows a compositional bias: polar residues. The span at 85–110 (GMTKDEEHKNTMCKDGRCPDINKKVE) shows a compositional bias: basic and acidic residues. Over residues 113–128 (NGVNNDVNTKTDGTTQ) the composition is skewed to polar residues.

This is an uncharacterized protein from Salmonella typhi.